The following is a 199-amino-acid chain: Fe/S biogenesis protein NfuA (199 aa).

[4Fe-4S] cluster contacts are provided by cysteine 151 and cysteine 154.

The protein belongs to the NfuA family. Homodimer. The cofactor is [4Fe-4S] cluster.

Functionally, involved in iron-sulfur cluster biogenesis. Binds a 4Fe-4S cluster, can transfer this cluster to apoproteins, and thereby intervenes in the maturation of Fe/S proteins. Could also act as a scaffold/chaperone for damaged Fe/S proteins. The protein is Fe/S biogenesis protein NfuA of Xylella fastidiosa (strain 9a5c).